The following is a 268-amino-acid chain: Zinc finger protein SNAI2 (268 aa).

Residues 1-20 (MPRSFLVKKHFNASKKPNYS) form an SNAG domain region. The tract at residues 80-117 (SSSLGRVSPPPPSDTSSKDHSGSESPISDEEERLQSKL) is disordered. 4 consecutive C2H2-type zinc fingers follow at residues 128–150 (FQCN…KQLH), 159–181 (FSCK…IRTH), 185–207 (CVCK…IRTH), and 213–235 (FSCP…LQTH). The C2H2-type 5; atypical zinc finger occupies 241 to 264 (YQCKNCSKTFSRMSLLHKHEESGC).

It belongs to the snail C2H2-type zinc-finger protein family. In terms of assembly, interacts (via SNAG domain) with LIMD1 (via LIM domains), WTIP (via LIM domains) and AJUBA (via LIM domains). Interacts (via zinc fingers) with KPNA2, KPNB1, and TNPO1. May interact (via zinc fingers) with IPO7. Post-translationally, phosphorylated by GSK3B. Once phosphorylated, it becomes a target for ubiquitination. In terms of processing, ubiquitinated by the SCF(FBXO11) complex; ubiquitination requires previous GSK3B-mediated SNAI2 phosphorylation. In terms of tissue distribution, expressed in most adult human tissues, including spleen, thymus, prostate, testis, ovary, small intestine, colon, heart, brain, placenta, lung, liver, skeletal muscle, kidney and pancreas. Not detected in peripheral blood leukocyte. Expressed in the dermis and in all layers of the epidermis, with high levels of expression in the basal layers (at protein level). Expressed in osteoblasts (at protein level). Expressed in mesenchymal stem cells (at protein level). Expressed in breast tumor cells (at protein level).

It is found in the nucleus. The protein localises to the cytoplasm. In terms of biological role, transcriptional repressor that modulates both activator-dependent and basal transcription. Involved in the generation and migration of neural crest cells. Plays a role in mediating RAF1-induced transcriptional repression of the TJ protein, occludin (OCLN) and subsequent oncogenic transformation of epithelial cells. Represses BRCA2 expression by binding to its E2-box-containing silencer and recruiting CTBP1 and HDAC1 in breast cells. In epidermal keratinocytes, binds to the E-box in ITGA3 promoter and represses its transcription. Involved in the regulation of ITGB1 and ITGB4 expression and cell adhesion and proliferation in epidermal keratinocytes. Binds to E-box2 domain of BSG and activates its expression during TGFB1-induced epithelial-mesenchymal transition (EMT) in hepatocytes. Represses E-Cadherin/CDH1 transcription via E-box elements. Involved in osteoblast maturation. Binds to RUNX2 and SOC9 promoters and may act as a positive and negative transcription regulator, respectively, in osteoblasts. Binds to CXCL12 promoter via E-box regions in mesenchymal stem cells and osteoblasts. Plays an essential role in TWIST1-induced EMT and its ability to promote invasion and metastasis. In Homo sapiens (Human), this protein is Zinc finger protein SNAI2 (SNAI2).